We begin with the raw amino-acid sequence, 235 residues long: Putative homeobox-leucine zipper protein ATHB-51 (235 aa).

A DNA-binding region (homeobox) is located at residues 74–133 (EMIKKKRLTSGQLASLERSFQEEIKLDSDRKVKLSRELGLQPRQIAVWFQNRRARWKAKQ). Residues 134–162 (LEQLYDSLRQEYDVVSREKQMLHDEVKKL) form a leucine-zipper region.

It belongs to the HD-ZIP homeobox family. Class I subfamily. Widely expressed.

The protein localises to the nucleus. Its function is as follows. Putative transcription factor. In Arabidopsis thaliana (Mouse-ear cress), this protein is Putative homeobox-leucine zipper protein ATHB-51 (ATHB-51).